We begin with the raw amino-acid sequence, 1146 residues long: Large proline-rich protein BAG6 (1146 aa).

Met1 bears the N-acetylmethionine mark. In terms of domain architecture, Ubiquitin-like spans 17–92; that stretch reads LEVLVKTLDS…HLVERAPPQT (76 aa). Disordered stretches follow at residues 87-128, 186-268, 381-436, 457-525, and 555-618; these read RAPP…HDRN, RGGT…HPSP, TMTG…TSHP, QDSG…QGAG, and PGMA…SAAD. Phosphoserine is present on Ser96. The segment covering 96-108 has biased composition (low complexity); sequence SGASSGTGSASAT. Residues 109–122 show a composition bias toward gly residues; that stretch reads HGGGPLPGTRGPGA. Residue Thr117 is modified to Phosphothreonine. Polar residues predominate over residues 208–217; it reads VALNSQTSEP. 2 repeat units span residues 236–265 and 410–438. The tract at residues 236–650 is 4 X 29 AA approximate repeats; it reads RPPTQTPELP…LASPTITVAV (415 aa). The segment covering 239–257 has biased composition (pro residues); that stretch reads TQTPELPPSGPAPAGPAPA. Over residues 394–413 the composition is skewed to low complexity; that stretch reads GAEAASPGSGQASSLPPSSA. Pro residues-rich tracts occupy residues 422–433 and 502–515; these read APPPGPAPPPAT and PTPP…PGGP. 2 stretches are compositionally biased toward low complexity: residues 555–573 and 583–601; these read PGMA…AQAP and PATA…TAGP. Repeat copies occupy residues 589-616 and 622-650. A compositionally biased stretch (pro residues) spans 603-614; that stretch reads PGGPAQPPPPQP. 2 disordered regions span residues 666 to 711 and 961 to 1146; these read ASQA…ESLP and PQAL…ADDP. Residues 670 to 694 are compositionally biased toward pro residues; the sequence is APPPPPPPPPPPPAPEQQTTPPPGS. The span at 977 to 986 shows a compositional bias: basic and acidic residues; the sequence is TSPEPQREDA. Phosphoserine occurs at positions 978 and 987. Positions 1021–1034 are enriched in low complexity; sequence AEPWAAAVPPEWVP. The tract at residues 1024–1054 is required for interaction with GET4; sequence WAAAVPPEWVPIIQQDIQSQRKVKPQPPLSD. Positions 1026-1068 match the Nuclear localization site motif; it reads AAVPPEWVPIIQQDIQSQRKVKPQPPLSDAYLSGMPAKRRKTM. Residues 1036-1146 are sufficient for the delivery of client proteins to the endoplasmic reticulum; it reads IQQDIQSQRK…NAHRAFADDP (111 aa). Thr1067 is subject to Phosphothreonine. The tract at residues 1072 to 1129 is BAG-similar domain, required and sufficient for interaction with UBL4A; it reads GPQLLLSEAVSRAAKAAGARPLTSPESLSRDLEAPEVQESYRQQLRSDIQKRLQEDPN. The segment covering 1080–1090 has biased composition (low complexity); sequence AVSRAAKAAGA. Residues Ser1095 and Ser1131 each carry the phosphoserine modification.

As to quaternary structure, component of the BAG6/BAT3 complex, also named BAT3 complex, at least composed of BAG6, UBL4A and GET4/TRC35. Interacts with GET4; the interaction is direct and localizes BAG6 in the cytosol. Interacts with UBL4A; the interaction is direct and required for UBL4A protein stability. Interacts with AIFM1. Interacts with HSPA2. Interacts with CTCFL. Interacts with p300/EP300. Interacts (via ubiquitin-like domain) with RNF126; required for BAG6-dependent ubiquitination of proteins mislocalized to the cytosol. Interacts (via ubiquitin-like domain) with SGTA; SGTA competes with RNF126 by binding the same region of BAG6, thereby promoting deubiquitination of BAG6-target proteins and rescuing them from degradation. Interacts with ricin A chain. Interacts with VCP and AMFR; both form the VCP/p97-AMFR/gp78 complex. Interacts with SYVN1. Interacts with USP13; the interaction is direct and may mediate UBL4A deubiquitination. Interacts with ZFAND2B. Interacts with KPNA2. Interacts with UBQLN4. Ricin can induce a cleavage by the caspase CASP3. The released C-terminal peptide induces apoptosis.

It localises to the cytoplasm. The protein localises to the cytosol. It is found in the nucleus. Its subcellular location is the secreted. The protein resides in the extracellular exosome. ATP-independent molecular chaperone preventing the aggregation of misfolded and hydrophobic patches-containing proteins. Functions as part of a cytosolic protein quality control complex, the BAG6/BAT3 complex, which maintains these client proteins in a soluble state and participates in their proper delivery to the endoplasmic reticulum or alternatively can promote their sorting to the proteasome where they undergo degradation. The BAG6/BAT3 complex is involved in the post-translational delivery of tail-anchored/type II transmembrane proteins to the endoplasmic reticulum membrane. Recruited to ribosomes, it interacts with the transmembrane region of newly synthesized tail-anchored proteins and together with SGTA and ASNA1 mediates their delivery to the endoplasmic reticulum. Client proteins that cannot be properly delivered to the endoplasmic reticulum are ubiquitinated by RNF126, an E3 ubiquitin-protein ligase associated with BAG6 and are sorted to the proteasome. SGTA which prevents the recruitment of RNF126 to BAG6 may negatively regulate the ubiquitination and the proteasomal degradation of client proteins. Similarly, the BAG6/BAT3 complex also functions as a sorting platform for proteins of the secretory pathway that are mislocalized to the cytosol either delivering them to the proteasome for degradation or to the endoplasmic reticulum. The BAG6/BAT3 complex also plays a role in the endoplasmic reticulum-associated degradation (ERAD), a quality control mechanism that eliminates unwanted proteins of the endoplasmic reticulum through their retrotranslocation to the cytosol and their targeting to the proteasome. It maintains these retrotranslocated proteins in an unfolded yet soluble state condition in the cytosol to ensure their proper delivery to the proteasome. BAG6 is also required for selective ubiquitin-mediated degradation of defective nascent chain polypeptides by the proteasome. In this context, it may participate in the production of antigenic peptides and play a role in antigen presentation in immune response. BAG6 is also involved in endoplasmic reticulum stress-induced pre-emptive quality control, a mechanism that selectively attenuates the translocation of newly synthesized proteins into the endoplasmic reticulum and reroutes them to the cytosol for proteasomal degradation. BAG6 may ensure the proper degradation of these proteins and thereby protects the endoplasmic reticulum from protein overload upon stress. By inhibiting the polyubiquitination and subsequent proteasomal degradation of HSPA2 it may also play a role in the assembly of the synaptonemal complex during spermatogenesis. Also positively regulates apoptosis by interacting with and stabilizing the proapoptotic factor AIFM1. By controlling the steady-state expression of the IGF1R receptor, indirectly regulates the insulin-like growth factor receptor signaling pathway. Its function is as follows. Involved in DNA damage-induced apoptosis: following DNA damage, accumulates in the nucleus and forms a complex with p300/EP300, enhancing p300/EP300-mediated p53/TP53 acetylation leading to increase p53/TP53 transcriptional activity. When nuclear, may also act as a component of some chromatin regulator complex that regulates histone 3 'Lys-4' dimethylation (H3K4me2). Functionally, released extracellularly via exosomes, it is a ligand of the natural killer/NK cells receptor NCR3 and stimulates NK cells cytotoxicity. It may thereby trigger NK cells cytotoxicity against neighboring tumor cells and immature myeloid dendritic cells (DC). In terms of biological role, may mediate ricin-induced apoptosis. The protein is Large proline-rich protein BAG6 of Rattus norvegicus (Rat).